The sequence spans 213 residues: Serine acetyltransferase (213 aa).

It belongs to the transferase hexapeptide repeat family.

The protein resides in the cytoplasm. It carries out the reaction L-serine + acetyl-CoA = O-acetyl-L-serine + CoA. It functions in the pathway amino-acid biosynthesis; L-cysteine biosynthesis; L-cysteine from L-serine: step 1/2. This Staphylococcus epidermidis (strain ATCC 35984 / DSM 28319 / BCRC 17069 / CCUG 31568 / BM 3577 / RP62A) protein is Serine acetyltransferase (cysE).